The primary structure comprises 652 residues: ATP-binding cassette sub-family G member 5 (652 aa).

The segment at 1–30 (MSELPFLSPEGARGPHNNRGSQSSLEEGSV) is disordered. At 1–384 (MSELPFLSPE…RVTRNLMRNK (384 aa)) the chain is on the cytoplasmic side. Residues 18 to 30 (NRGSQSSLEEGSV) show a composition bias toward polar residues. Residues 39–294 (LGVLNVSFSV…FNNCGYPCPE (256 aa)) enclose the ABC transporter domain. 87 to 94 (GSSGSGKT) contacts ATP. Residues 385–405 (QVVIMRLVQNLIMGLFLIFYL) form a helical membrane-spanning segment. The 258-residue stretch at 389–646 (MRLVQNLIMG…ILGMVVFKVR (258 aa)) folds into the ABC transmembrane type-2 domain. The Extracellular portion of the chain corresponds to 406-422 (LRVQNNMLKGAVQDRVG). The helical transmembrane segment at 423 to 443 (LLYQLVGATPYTGMLNAVNLF) threads the bilayer. The Cytoplasmic segment spans residues 444–468 (PMLRAVSDQESQDGLYQKWQMLLAY). The helical transmembrane segment at 469-490 (VLHALPFSIVATVIFSSVCYWT) threads the bilayer. At 491-501 (LGLYPEVARFG) the chain is on the extracellular side. Residues 502–522 (YFSAALLAPHLIGEFLTLVLL) form a helical membrane-spanning segment. At 523–529 (GMVQNPN) the chain is on the cytoplasmic side. Residues 530–550 (IVNSIVALLSISGLLIGSGFI) form a helical membrane-spanning segment. Topologically, residues 551–624 (RNIEEMPIPL…PGATSRFTTN (74 aa)) are extracellular. Residues Asn-585 and Asn-592 are each glycosylated (N-linked (GlcNAc...) asparagine). A helical transmembrane segment spans residues 625-645 (FLILYSFIPTLVILGMVVFKV). The Cytoplasmic segment spans residues 646-652 (RDYLISR).

The protein belongs to the ABC transporter superfamily. ABCG family. Eye pigment precursor importer (TC 3.A.1.204) subfamily. In terms of assembly, heterodimer with ABCG8. Mg(2+) serves as cofactor. N-glycosylated. N-glycosylation is important for efficient export out of the endoplasmic reticulum. Detected in liver (at protein level). Expressed only in liver and intestine.

The protein localises to the cell membrane. It is found in the apical cell membrane. The enzyme catalyses cholesterol(in) + ATP + H2O = cholesterol(out) + ADP + phosphate + H(+). It carries out the reaction sitosterol(in) + ATP + H2O = sitosterol(out) + ADP + phosphate + H(+). ABCG5 and ABCG8 form an obligate heterodimer that mediates Mg(2+)- and ATP-dependent sterol transport across the cell membrane. Plays an essential role in the selective transport of dietary plant sterols and cholesterol in and out of the enterocytes and in the selective sterol excretion by the liver into bile. Required for normal sterol homeostasis. The heterodimer with ABCG8 has ATPase activity. This is ATP-binding cassette sub-family G member 5 from Rattus norvegicus (Rat).